The chain runs to 358 residues: Alternative oxidase, mitochondrial (358 aa).

Residues 152 to 172 (LIRYVFLESVAGVPGMVAGML) traverse the membrane as a helical segment. E159, E198, and H201 together coordinate Fe cation. Residues 218–238 (MILGAQGVFFNSFFLCYLFSP) traverse the membrane as a helical segment. Residues E249, E306, and H309 each coordinate Fe cation.

This sequence belongs to the alternative oxidase family. Fe cation is required as a cofactor.

Its subcellular location is the mitochondrion inner membrane. Catalyzes cyanide-resistant oxygen consumption. May increase respiration when the cytochrome respiratory pathway is restricted, or in response to low temperatures. This is Alternative oxidase, mitochondrial (AOX1) from Monilinia fructicola (Brown rot fungus).